The primary structure comprises 251 residues: Large ribosomal subunit protein uL3 (251 aa).

Glutamine 151 is subject to N5-methylglutamine. The disordered stretch occupies residues 214 to 251 (KDAPFPAGLKSAANSNSAPTETPAEEVAAPEATEGQEG). Over residues 231 to 251 (APTETPAEEVAAPEATEGQEG) the composition is skewed to low complexity.

This sequence belongs to the universal ribosomal protein uL3 family. As to quaternary structure, part of the 50S ribosomal subunit. Forms a cluster with proteins L14 and L19. In terms of processing, methylated by PrmB.

In terms of biological role, one of the primary rRNA binding proteins, it binds directly near the 3'-end of the 23S rRNA, where it nucleates assembly of the 50S subunit. The sequence is that of Large ribosomal subunit protein uL3 from Rhizorhabdus wittichii (strain DSM 6014 / CCUG 31198 / JCM 15750 / NBRC 105917 / EY 4224 / RW1) (Sphingomonas wittichii).